Consider the following 244-residue polypeptide: rRNA adenine N-6-methyltransferase (244 aa).

6 residues coordinate S-adenosyl-L-methionine: N11, I13, G38, E59, D84, and S101.

It belongs to the class I-like SAM-binding methyltransferase superfamily. rRNA adenine N(6)-methyltransferase family.

Its function is as follows. Involved in erythromycin resistance. The chain is rRNA adenine N-6-methyltransferase (ermG) from Lysinibacillus sphaericus (Bacillus sphaericus).